The chain runs to 278 residues: Phosphonates import ATP-binding protein PhnC (278 aa).

Residues 25-273 (LAVKGLVKAY…IIQDIYSDES (249 aa)) form the ABC transporter domain. ATP is bound at residue 58 to 65 (GRSGAGKS).

This sequence belongs to the ABC transporter superfamily. Phosphonates importer (TC 3.A.1.9.1) family. The complex is composed of two ATP-binding proteins (PhnC), two transmembrane proteins (PhnE) and a solute-binding protein (PhnD).

The protein localises to the cell inner membrane. It carries out the reaction phosphonate(out) + ATP + H2O = phosphonate(in) + ADP + phosphate + H(+). In terms of biological role, part of the ABC transporter complex PhnCDE involved in phosphonates import. Responsible for energy coupling to the transport system. In Yersinia pestis bv. Antiqua (strain Antiqua), this protein is Phosphonates import ATP-binding protein PhnC.